The chain runs to 1486 residues: Alsin homolog (1486 aa).

3 RCC1 repeats span residues 147-201 (QGVV…MLVA), 256-307 (HTQL…ARTL), and 308-363 (DGRL…LLNA). MORN repeat units follow at residues 744–765 (CGTW…DGSV), 766–784 (YCGE…MVIP), 789–804 (YVGN…HGVY), 817–832 (YEGN…HGVM), 839–853 (YVGE…GYGV), and 863–884 (YMGM…NRGD). Positions 1333 to 1486 (SRKDEMYRQN…VTSRALQKIP (154 aa)) constitute a VPS9 domain.

As to expression, in the embryo, expressed in a wide range of tissues including the epidermis and the ventral nerve cord.

Has guanine nucleotide exchange factor (GEF) activity towards Rab5. Promotes the exchange of GDP to GTP, converting inactive GDP-bound Rab5 into its active GTP-bound form. The chain is Alsin homolog from Drosophila melanogaster (Fruit fly).